The sequence spans 255 residues: Expansin-A25 (255 aa).

A signal peptide spans 1–26 (MEYAILFATSLVITVLAASGFAPAHG). An Expansin-like EG45 domain is found at 45-160 (GGACGYGNLY…QQVKCWRQGG (116 aa)). Positions 170 to 249 (FFELVLVSNV…WWSFGMTFTS (80 aa)) constitute an Expansin-like CBD domain.

The protein belongs to the expansin family. Expansin A subfamily. As to expression, expressed in panicles and flowers.

The protein localises to the secreted. It is found in the cell wall. It localises to the membrane. May cause loosening and extension of plant cell walls by disrupting non-covalent bonding between cellulose microfibrils and matrix glucans. No enzymatic activity has been found. May be required for rapid internodal elongation in deepwater rice during submergence. The sequence is that of Expansin-A25 (EXPA25) from Oryza sativa subsp. japonica (Rice).